A 305-amino-acid chain; its full sequence is Tyrosine recombinase XerC (305 aa).

The region spanning 4-95 (TSIQALINKW…AVKNFYRFLE (92 aa)) is the Core-binding (CB) domain. Positions 116 to 298 (LLPKALSEDD…SIKHLEAVYT (183 aa)) constitute a Tyr recombinase domain. Active-site residues include arginine 159, lysine 182, histidine 250, arginine 253, and histidine 276. The active-site O-(3'-phospho-DNA)-tyrosine intermediate is tyrosine 285.

This sequence belongs to the 'phage' integrase family. XerC subfamily. As to quaternary structure, forms a cyclic heterotetrameric complex composed of two molecules of XerC and two molecules of XerD.

The protein localises to the cytoplasm. In terms of biological role, site-specific tyrosine recombinase, which acts by catalyzing the cutting and rejoining of the recombining DNA molecules. The XerC-XerD complex is essential to convert dimers of the bacterial chromosome into monomers to permit their segregation at cell division. It also contributes to the segregational stability of plasmids. The protein is Tyrosine recombinase XerC of Rickettsia conorii (strain ATCC VR-613 / Malish 7).